A 92-amino-acid chain; its full sequence is MKTLLLTLVVVTIVCLDLGDGLICYVDSKTSRTCPPGENVCFTETWCDARCSLLGKRVDLGCAATCPTAKPGVDITCCSTDKCNPFPTQKHR.

An N-terminal signal peptide occupies residues 1 to 21 (MKTLLLTLVVVTIVCLDLGDG). 5 disulfides stabilise this stretch: Cys24/Cys41, Cys34/Cys62, Cys47/Cys51, Cys66/Cys77, and Cys78/Cys83.

The protein belongs to the three-finger toxin family. Long-chain subfamily. Type II alpha-neurotoxin sub-subfamily. As to expression, expressed by the venom gland.

The protein resides in the secreted. Its function is as follows. Binds with high affinity to muscular (alpha-1/CHRNA1) and neuronal (alpha-7/CHRNA7) nicotinic acetylcholine receptor (nAChR) and inhibits acetylcholine from binding to the receptor, thereby impairing neuromuscular and neuronal transmission. The sequence is that of Alpha-elapitoxin-As2a from Austrelaps superbus (Lowland copperhead snake).